Consider the following 654-residue polypeptide: RNA polymerase I-specific transcription initiation factor tif-1A (654 aa).

The tract at residues 1-37 (MKRSTANAPKLSPKHESESDPKKVKLEEEAKPTVNQA) is disordered. Residues 13 to 31 (PKHESESDPKKVKLEEEAK) show a composition bias toward basic and acidic residues.

The protein belongs to the RRN3 family.

It is found in the nucleus. The protein localises to the nucleolus. Required for efficient transcription initiation by RNA polymerase I (Pol I). The protein is RNA polymerase I-specific transcription initiation factor tif-1A of Caenorhabditis elegans.